Consider the following 253-residue polypeptide: Imidazole glycerol phosphate synthase subunit HisF (253 aa).

Residues aspartate 11 and aspartate 130 contribute to the active site.

This sequence belongs to the HisA/HisF family. As to quaternary structure, heterodimer of HisH and HisF.

It is found in the cytoplasm. The catalysed reaction is 5-[(5-phospho-1-deoxy-D-ribulos-1-ylimino)methylamino]-1-(5-phospho-beta-D-ribosyl)imidazole-4-carboxamide + L-glutamine = D-erythro-1-(imidazol-4-yl)glycerol 3-phosphate + 5-amino-1-(5-phospho-beta-D-ribosyl)imidazole-4-carboxamide + L-glutamate + H(+). It functions in the pathway amino-acid biosynthesis; L-histidine biosynthesis; L-histidine from 5-phospho-alpha-D-ribose 1-diphosphate: step 5/9. IGPS catalyzes the conversion of PRFAR and glutamine to IGP, AICAR and glutamate. The HisF subunit catalyzes the cyclization activity that produces IGP and AICAR from PRFAR using the ammonia provided by the HisH subunit. The polypeptide is Imidazole glycerol phosphate synthase subunit HisF (Thermotoga sp. (strain RQ2)).